Consider the following 293-residue polypeptide: D-alanine--D-alanine ligase (293 aa).

One can recognise an ATP-grasp domain in the interval 98–291 (KIIWEQHSLT…FNKLVTSIIN (194 aa)). 124–177 (NFPLPWAVKPTLEGSSIGISKVDNQMQLNDALMLAWQYAPYALIEQWIKGDEYT) provides a ligand contact to ATP. Mg(2+) contacts are provided by aspartate 245, glutamate 258, and asparagine 260.

The protein belongs to the D-alanine--D-alanine ligase family. The cofactor is Mg(2+). Requires Mn(2+) as cofactor.

It is found in the cytoplasm. The enzyme catalyses 2 D-alanine + ATP = D-alanyl-D-alanine + ADP + phosphate + H(+). It functions in the pathway cell wall biogenesis; peptidoglycan biosynthesis. Functionally, cell wall formation. This Vesicomyosocius okutanii subsp. Calyptogena okutanii (strain HA) protein is D-alanine--D-alanine ligase.